Consider the following 387-residue polypeptide: MADPKFQYLPYIAHDQPDVYETPDVNEAETSDYDEDEPVNDAIERLHISTKDSIGKFRGKYLTGEVDFSDGIGRKNRLGYDARSLDYELAGEGERETPLQRCHRLKCEMNELMEEIEASRADTGRTAEEKASHETVFGVVSTAKKVLESLKLEQVIGSEVVAGGAGGGDAEAKKLIAQIEEYRKTGAVSSSDPKVVANELVQSARVAQLEHRLHQLEVAVGAKPERISRLAGTTGTGNLIEAVQNISAKAALLQPSQLDTIEQRLNNLLQQMNSIQEKSNATGQDPNREQKILELYEIAKSTEPIVQVLPDILNRMLTLESLHKYATNFSKLFAELETTQASILNGVAANKTLLTGVQEAFAQNLENVNKEVKKLEERMTKLQQMIK.

Coiled coils occupy residues 99 to 125, 256 to 282, and 355 to 387; these read LQRCHRLKCEMNELMEEIEASRADTGR, SQLDTIEQRLNNLLQQMNSIQEKSNAT, and TGVQEAFAQNLENVNKEVKKLEERMTKLQQMIK.

This sequence belongs to the dynactin subunit 2 family. Subunit of dynactin, a multiprotein complex associated with dynein.

Its subcellular location is the cytoplasm. The protein localises to the cytoskeleton. The protein resides in the membrane. Functionally, modulates cytoplasmic dynein binding to an organelle, and plays a role in prometaphase chromosome alignment and spindle organization during mitosis. This Anopheles gambiae (African malaria mosquito) protein is Dynactin subunit 2.